Here is a 499-residue protein sequence, read N- to C-terminus: Uridine-cytidine kinase A (499 aa).

The tract at residues 1–44 (MSDNSTTKVTTNDSPSLTTTTSTTTAPTTTTTTTTTPTHNHDTT) is disordered. Residues 10-38 (TTNDSPSLTTTTSTTTAPTTTTTTTTTPT) show a composition bias toward low complexity. 78–85 (GGSASGKT) is an ATP binding site.

This sequence belongs to the uridine kinase family.

It catalyses the reaction uridine + ATP = UMP + ADP + H(+). The enzyme catalyses cytidine + ATP = CMP + ADP + H(+). It participates in pyrimidine metabolism; CTP biosynthesis via salvage pathway; CTP from cytidine: step 1/3. The protein operates within pyrimidine metabolism; UMP biosynthesis via salvage pathway; UMP from uridine: step 1/1. Its function is as follows. Catalyzes the conversion of uridine into uridine monophosphate and cytidine into cytidine monophosphate in the pyrimidine salvage pathway. The protein is Uridine-cytidine kinase A (udkA) of Dictyostelium discoideum (Social amoeba).